The chain runs to 491 residues: 2-aminomuconic 6-semialdehyde dehydrogenase (491 aa).

Active-site residues include glutamate 252 and cysteine 286.

The protein belongs to the aldehyde dehydrogenase family. As to quaternary structure, homotrimer.

The catalysed reaction is 2-aminomuconate 6-semialdehyde + NAD(+) + H2O = (2Z,4E)-2-aminomuconate + NADH + 2 H(+). Its activity is regulated as follows. Strongly inhibited by Ag(+) and Hg(+), and comnpletely inhibited by p-chloromercuribenzoic acid. Its function is as follows. Involved in the modified meta-cleavage pathway for 2-aminophenol catabolism. The enzyme is also active toward 2-hydroxymuconic 6-semialdehyde, acetaldehyde, propionaldehyde, and butyraldehyde. The chain is 2-aminomuconic 6-semialdehyde dehydrogenase (amnC) from Pseudomonas sp.